We begin with the raw amino-acid sequence, 224 residues long: Phosphoribosylformylglycinamidine synthase subunit PurQ (224 aa).

In terms of domain architecture, Glutamine amidotransferase type-1 spans 4–224 (RIGVITFPGT…YSALDSVLAS (221 aa)). The Nucleophile role is filled by Cys87. Residues His195 and Glu197 contribute to the active site.

Part of the FGAM synthase complex composed of 1 PurL, 1 PurQ and 2 PurS subunits.

The protein localises to the cytoplasm. It catalyses the reaction N(2)-formyl-N(1)-(5-phospho-beta-D-ribosyl)glycinamide + L-glutamine + ATP + H2O = 2-formamido-N(1)-(5-O-phospho-beta-D-ribosyl)acetamidine + L-glutamate + ADP + phosphate + H(+). It carries out the reaction L-glutamine + H2O = L-glutamate + NH4(+). The protein operates within purine metabolism; IMP biosynthesis via de novo pathway; 5-amino-1-(5-phospho-D-ribosyl)imidazole from N(2)-formyl-N(1)-(5-phospho-D-ribosyl)glycinamide: step 1/2. In terms of biological role, part of the phosphoribosylformylglycinamidine synthase complex involved in the purines biosynthetic pathway. Catalyzes the ATP-dependent conversion of formylglycinamide ribonucleotide (FGAR) and glutamine to yield formylglycinamidine ribonucleotide (FGAM) and glutamate. The FGAM synthase complex is composed of three subunits. PurQ produces an ammonia molecule by converting glutamine to glutamate. PurL transfers the ammonia molecule to FGAR to form FGAM in an ATP-dependent manner. PurS interacts with PurQ and PurL and is thought to assist in the transfer of the ammonia molecule from PurQ to PurL. The polypeptide is Phosphoribosylformylglycinamidine synthase subunit PurQ (Mycobacterium leprae (strain TN)).